The sequence spans 346 residues: [LysW]-lysine/[LysW]-ornithine hydrolase (346 aa).

Zn(2+) is bound at residue His68. Asp70 is an active-site residue. Asp92 serves as a coordination point for Zn(2+). Glu122 functions as the Proton acceptor in the catalytic mechanism. Glu123, Glu146, and His317 together coordinate Zn(2+).

This sequence belongs to the peptidase M20A family. LysK subfamily. Requires Zn(2+) as cofactor. The cofactor is Co(2+).

It localises to the cytoplasm. It catalyses the reaction [amino-group carrier protein]-C-terminal-gamma-(L-lysyl)-L-glutamate + H2O = [amino-group carrier protein]-C-terminal-L-glutamate + L-lysine. The enzyme catalyses [amino-group carrier protein]-C-terminal-gamma-(L-ornithyl)-L-glutamate + H2O = [amino-group carrier protein]-C-terminal-L-glutamate + L-ornithine. The protein operates within amino-acid biosynthesis; L-lysine biosynthesis via AAA pathway; L-lysine from L-alpha-aminoadipate (Thermus route): step 5/5. It functions in the pathway amino-acid biosynthesis; L-arginine biosynthesis. Catalyzes the release of L-lysine from [LysW]-gamma-L-lysine and the release of L-ornithine from [LysW]-L-ornithine. In Saccharolobus solfataricus (strain ATCC 35092 / DSM 1617 / JCM 11322 / P2) (Sulfolobus solfataricus), this protein is [LysW]-lysine/[LysW]-ornithine hydrolase.